A 276-amino-acid chain; its full sequence is Aliphatic sulfonates import ATP-binding protein SsuB 1 (276 aa).

The disordered stretch occupies residues 1-21 (MSTGNVTTLRRPEAPPSLPAG). The ABC transporter domain occupies 39-259 (FSFRNVTKSF…RHGTPEFARL (221 aa)). Residue 71 to 78 (GKSGCGKS) coordinates ATP.

Belongs to the ABC transporter superfamily. Aliphatic sulfonates importer (TC 3.A.1.17.2) family. In terms of assembly, the complex is composed of two ATP-binding proteins (SsuB), two transmembrane proteins (SsuC) and a solute-binding protein (SsuA).

The protein localises to the cell inner membrane. The enzyme catalyses ATP + H2O + aliphatic sulfonate-[sulfonate-binding protein]Side 1 = ADP + phosphate + aliphatic sulfonateSide 2 + [sulfonate-binding protein]Side 1.. Its function is as follows. Part of the ABC transporter complex SsuABC involved in aliphatic sulfonates import. Responsible for energy coupling to the transport system. The chain is Aliphatic sulfonates import ATP-binding protein SsuB 1 from Agrobacterium fabrum (strain C58 / ATCC 33970) (Agrobacterium tumefaciens (strain C58)).